A 193-amino-acid chain; its full sequence is dTTP/UTP pyrophosphatase (193 aa).

The active-site Proton acceptor is the D71.

The protein belongs to the Maf family. YhdE subfamily. It depends on a divalent metal cation as a cofactor.

Its subcellular location is the cytoplasm. It catalyses the reaction dTTP + H2O = dTMP + diphosphate + H(+). The enzyme catalyses UTP + H2O = UMP + diphosphate + H(+). Functionally, nucleoside triphosphate pyrophosphatase that hydrolyzes dTTP and UTP. May have a dual role in cell division arrest and in preventing the incorporation of modified nucleotides into cellular nucleic acids. The protein is dTTP/UTP pyrophosphatase of Dictyoglomus turgidum (strain DSM 6724 / Z-1310).